Reading from the N-terminus, the 159-residue chain is Ribosomal RNA large subunit methyltransferase H (159 aa).

S-adenosyl-L-methionine is bound by residues leucine 76, glycine 108, and 127-132; that span reads FSKMTF.

This sequence belongs to the RNA methyltransferase RlmH family. Homodimer.

Its subcellular location is the cytoplasm. It carries out the reaction pseudouridine(1915) in 23S rRNA + S-adenosyl-L-methionine = N(3)-methylpseudouridine(1915) in 23S rRNA + S-adenosyl-L-homocysteine + H(+). Specifically methylates the pseudouridine at position 1915 (m3Psi1915) in 23S rRNA. The sequence is that of Ribosomal RNA large subunit methyltransferase H from Halalkalibacterium halodurans (strain ATCC BAA-125 / DSM 18197 / FERM 7344 / JCM 9153 / C-125) (Bacillus halodurans).